Consider the following 143-residue polypeptide: Putative complexin-1 (143 aa).

Residues 16-72 (EVTGGLGMKDDGGEKTETGEDPEVIAARLEQEERRKEKHRKMENEREKMRQGIRDKY) form a disordered region. 2 stretches are compositionally biased toward basic and acidic residues: residues 23–33 (MKDDGGEKTET) and 44–72 (LEQE…RDKY). Positions 40–71 (IAARLEQEERRKEKHRKMENEREKMRQGIRDK) form a coiled coil.

The protein belongs to the complexin/synaphin family.

The protein localises to the cytoplasm. The protein resides in the cytosol. Functionally, positively regulates a late step in synaptic vesicle exocytosis. The polypeptide is Putative complexin-1 (cpx-1) (Caenorhabditis elegans).